We begin with the raw amino-acid sequence, 240 residues long: Endonuclease NucS 1 (240 aa).

This sequence belongs to the NucS endonuclease family.

The protein resides in the cytoplasm. In terms of biological role, cleaves both 3' and 5' ssDNA extremities of branched DNA structures. The protein is Endonuclease NucS 1 of Halobacterium salinarum (strain ATCC 700922 / JCM 11081 / NRC-1) (Halobacterium halobium).